We begin with the raw amino-acid sequence, 212 residues long: Calaxin (212 aa).

EF-hand domains are found at residues 65 to 100 (TDDM…FLRG), 101 to 136 (TLDE…SLLK), and 146 to 181 (GIKD…ENLL). Positions 78, 80, 82, 84, 89, 114, 116, 118, 125, 159, 161, 163, 165, and 170 each coordinate Ca(2+).

Component of the outer dynein arm-docking complex along with ODAD1, ODAD2, ODAD3 and ODAD4.

Its subcellular location is the cytoplasm. The protein resides in the cytoskeleton. The protein localises to the cilium axoneme. It localises to the cell projection. It is found in the cilium. Its subcellular location is the flagellum. In terms of biological role, component of the outer dynein arm-docking complex (ODA-DC) that mediates outer dynein arms (ODA) binding onto the doublet microtubule. Seems to regulate the assembly of both ODAs and their axonemal docking complex onto ciliary microtubules. Regulates ciliary and flagellar motility and is required for cilia-driven determination of body laterality. This Mus musculus (Mouse) protein is Calaxin (Clxn).